Reading from the N-terminus, the 713-residue chain is Polyribonucleotide nucleotidyltransferase (713 aa).

Positions 491 and 497 each coordinate Mg(2+). One can recognise a KH domain in the interval 558–617 (PRMITIKINPEKIRDVIGKGGSVIRALTEETGTTIDISDDGVVTIASTSSDGMAEAKKRI). Positions 627–695 (GQVYEGTVLK…EKGRVRLSAK (69 aa)) constitute an S1 motif domain.

It belongs to the polyribonucleotide nucleotidyltransferase family. Mg(2+) is required as a cofactor.

Its subcellular location is the cytoplasm. The catalysed reaction is RNA(n+1) + phosphate = RNA(n) + a ribonucleoside 5'-diphosphate. Functionally, involved in mRNA degradation. Catalyzes the phosphorolysis of single-stranded polyribonucleotides processively in the 3'- to 5'-direction. The protein is Polyribonucleotide nucleotidyltransferase of Burkholderia cenocepacia (strain ATCC BAA-245 / DSM 16553 / LMG 16656 / NCTC 13227 / J2315 / CF5610) (Burkholderia cepacia (strain J2315)).